The following is a 117-amino-acid chain: Flagellar transcriptional regulator FlhD (117 aa).

Belongs to the FlhD family. In terms of assembly, homodimer; disulfide-linked. Forms a heterohexamer composed of two FlhC and four FlhD subunits. Each FlhC binds a FlhD dimer, forming a heterotrimer, and a hexamer assembles by dimerization of two heterotrimers.

The protein resides in the cytoplasm. In terms of biological role, functions in complex with FlhC as a master transcriptional regulator that regulates transcription of several flagellar and non-flagellar operons by binding to their promoter region. Activates expression of class 2 flagellar genes, including fliA, which is a flagellum-specific sigma factor that turns on the class 3 genes. Also regulates genes whose products function in a variety of physiological pathways. This is Flagellar transcriptional regulator FlhD from Photorhabdus laumondii subsp. laumondii (strain DSM 15139 / CIP 105565 / TT01) (Photorhabdus luminescens subsp. laumondii).